Here is a 496-residue protein sequence, read N- to C-terminus: Putative aldehyde dehydrogenase-like protein C922.07c (496 aa).

An NAD(+)-binding site is contributed by 241-246 (GSTKVG). E263 serves as the catalytic Proton acceptor. Residue C297 is the Nucleophile of the active site.

The protein belongs to the aldehyde dehydrogenase family.

It is found in the cytoplasm. The protein resides in the nucleus. The protein is Putative aldehyde dehydrogenase-like protein C922.07c of Schizosaccharomyces pombe (strain 972 / ATCC 24843) (Fission yeast).